A 329-amino-acid polypeptide reads, in one-letter code: 3'-5' exonuclease (329 aa).

The disordered stretch occupies residues 26-88 (EEKPKPKKVV…MADVGTPSPE (63 aa)). A compositionally biased stretch (basic and acidic residues) spans 46 to 65 (KNLDTPEIVNKENAEVENPP). Phosphoserine occurs at positions 78 and 86. The region spanning 130–288 (TEIVPMAFDM…IGQVIYREIE (159 aa)) is the 3'-5' exonuclease domain. The Mg(2+) site is built by aspartate 138, glutamate 140, and aspartate 276.

The protein belongs to the WRNexo family.

The protein resides in the nucleus. Has exonuclease activity on both single-stranded and duplex templates bearing overhangs, but not blunt ended duplex DNA, and cleaves in a 3'-5' direction. Essential for the formation of DNA replication focal centers. Has an important role in maintaining genome stability. The chain is 3'-5' exonuclease from Drosophila mojavensis (Fruit fly).